The chain runs to 609 residues: Alpha-fetoprotein (609 aa).

A signal peptide spans 1 to 18; that stretch reads MKWVESIFLIFLLNFTES. 3 Albumin domains span residues 19 to 210, 211 to 402, and 403 to 601; these read RTLH…ATVT, KELR…EELQ, and KYIQ…KLIS. Residue histidine 22 coordinates Cu(2+). Intrachain disulfides connect cysteine 99–cysteine 114, cysteine 113–cysteine 124, cysteine 148–cysteine 193, cysteine 192–cysteine 201, cysteine 224–cysteine 270, cysteine 269–cysteine 277, cysteine 289–cysteine 303, and cysteine 302–cysteine 313. 3 positions are modified to phosphoserine: serine 111, serine 115, and serine 117. Asparagine 251 is a glycosylation site (N-linked (GlcNAc...) asparagine). Serine 344 carries the post-translational modification Phosphoserine. Intrachain disulfides connect cysteine 384–cysteine 393, cysteine 416–cysteine 462, cysteine 461–cysteine 472, cysteine 485–cysteine 501, cysteine 500–cysteine 511, cysteine 538–cysteine 583, and cysteine 582–cysteine 591. Serine 444 carries the phosphoserine modification.

It belongs to the ALB/AFP/VDB family. Dimeric and trimeric forms have been found in addition to the monomeric form. Sulfated. In terms of tissue distribution, plasma.

The protein resides in the secreted. Binds copper, nickel, and fatty acids as well as, and bilirubin less well than, serum albumin. The polypeptide is Alpha-fetoprotein (AFP) (Gorilla gorilla gorilla (Western lowland gorilla)).